Consider the following 603-residue polypeptide: Proline--tRNA ligase (603 aa).

It belongs to the class-II aminoacyl-tRNA synthetase family. ProS type 1 subfamily. Homodimer.

It is found in the cytoplasm. The catalysed reaction is tRNA(Pro) + L-proline + ATP = L-prolyl-tRNA(Pro) + AMP + diphosphate. Functionally, catalyzes the attachment of proline to tRNA(Pro) in a two-step reaction: proline is first activated by ATP to form Pro-AMP and then transferred to the acceptor end of tRNA(Pro). As ProRS can inadvertently accommodate and process non-cognate amino acids such as alanine and cysteine, to avoid such errors it has two additional distinct editing activities against alanine. One activity is designated as 'pretransfer' editing and involves the tRNA(Pro)-independent hydrolysis of activated Ala-AMP. The other activity is designated 'posttransfer' editing and involves deacylation of mischarged Ala-tRNA(Pro). The misacylated Cys-tRNA(Pro) is not edited by ProRS. This chain is Proline--tRNA ligase, found in Synechocystis sp. (strain ATCC 27184 / PCC 6803 / Kazusa).